Consider the following 121-residue polypeptide: MLNRRDCGAAVEVAARRHLERAGLRWLASNVCFRGGELDLVMYDVMSVVFVEVRYRQQESHGSAAQSVDRRKRRKLVMAAQLFLQRHPFLAQVPCRFDVVEGAGRPLQLHWIRDAFRLDDC.

It belongs to the UPF0102 family.

The sequence is that of UPF0102 protein Xfasm12_1748 from Xylella fastidiosa (strain M12).